We begin with the raw amino-acid sequence, 158 residues long: Cyclic pyranopterin monophosphate synthase (158 aa).

Residues Leu-75 to His-77 and Met-113 to Glu-114 each bind substrate. The active site involves Asp-128.

The protein belongs to the MoaC family. In terms of assembly, homohexamer; trimer of dimers.

The catalysed reaction is (8S)-3',8-cyclo-7,8-dihydroguanosine 5'-triphosphate = cyclic pyranopterin phosphate + diphosphate. Its pathway is cofactor biosynthesis; molybdopterin biosynthesis. Catalyzes the conversion of (8S)-3',8-cyclo-7,8-dihydroguanosine 5'-triphosphate to cyclic pyranopterin monophosphate (cPMP). In Polynucleobacter asymbioticus (strain DSM 18221 / CIP 109841 / QLW-P1DMWA-1) (Polynucleobacter necessarius subsp. asymbioticus), this protein is Cyclic pyranopterin monophosphate synthase.